The primary structure comprises 214 residues: Orotate phosphoribosyltransferase (214 aa).

Lys-26 serves as a coordination point for 5-phospho-alpha-D-ribose 1-diphosphate. 34–35 (FF) provides a ligand contact to orotate. 5-phospho-alpha-D-ribose 1-diphosphate is bound by residues 72–73 (YK), Arg-99, Lys-100, Lys-103, His-105, and 124–132 (DDVITAGTA). Positions 128 and 156 each coordinate orotate.

This sequence belongs to the purine/pyrimidine phosphoribosyltransferase family. PyrE subfamily. In terms of assembly, homodimer. Mg(2+) is required as a cofactor.

It carries out the reaction orotidine 5'-phosphate + diphosphate = orotate + 5-phospho-alpha-D-ribose 1-diphosphate. It functions in the pathway pyrimidine metabolism; UMP biosynthesis via de novo pathway; UMP from orotate: step 1/2. Its function is as follows. Catalyzes the transfer of a ribosyl phosphate group from 5-phosphoribose 1-diphosphate to orotate, leading to the formation of orotidine monophosphate (OMP). This Pasteurella multocida (strain Pm70) protein is Orotate phosphoribosyltransferase.